Here is a 266-residue protein sequence, read N- to C-terminus: Phosphatidylglycerol--prolipoprotein diacylglyceryl transferase (266 aa).

A run of 7 helical transmembrane segments spans residues 17–37 (LKIH…WLLA), 56–76 (LVFW…VLFY), 92–112 (WKGG…VWWF), 120–140 (FFQL…AGRI), 171–191 (PSQL…LWLF), 199–219 (ASVS…VEFV), and 233–253 (WLTM…ALMV). A 1,2-diacyl-sn-glycero-3-phospho-(1'-sn-glycerol) is bound at residue Arg-139.

Belongs to the Lgt family.

The protein localises to the cell inner membrane. The enzyme catalyses L-cysteinyl-[prolipoprotein] + a 1,2-diacyl-sn-glycero-3-phospho-(1'-sn-glycerol) = an S-1,2-diacyl-sn-glyceryl-L-cysteinyl-[prolipoprotein] + sn-glycerol 1-phosphate + H(+). It participates in protein modification; lipoprotein biosynthesis (diacylglyceryl transfer). In terms of biological role, catalyzes the transfer of the diacylglyceryl group from phosphatidylglycerol to the sulfhydryl group of the N-terminal cysteine of a prolipoprotein, the first step in the formation of mature lipoproteins. This is Phosphatidylglycerol--prolipoprotein diacylglyceryl transferase from Pseudomonas aeruginosa (strain UCBPP-PA14).